A 69-amino-acid chain; its full sequence is Sec-independent protein translocase protein TatA (69 aa).

A helical membrane pass occupies residues 1–21; the sequence is MFGLGTMEMVIILVIVLVIFG. A disordered region spans residues 44–69; the sequence is NAEDDAPAEPEVSKPAAAESTEKKDA.

It belongs to the TatA/E family. As to quaternary structure, the Tat system comprises two distinct complexes: a TatABC complex, containing multiple copies of TatA, TatB and TatC subunits, and a separate TatA complex, containing only TatA subunits. Substrates initially bind to the TatABC complex, which probably triggers association of the separate TatA complex to form the active translocon.

The protein resides in the cell inner membrane. Functionally, part of the twin-arginine translocation (Tat) system that transports large folded proteins containing a characteristic twin-arginine motif in their signal peptide across membranes. TatA could form the protein-conducting channel of the Tat system. This Magnetococcus marinus (strain ATCC BAA-1437 / JCM 17883 / MC-1) protein is Sec-independent protein translocase protein TatA.